The sequence spans 838 residues: DNA gyrase subunit A (838 aa).

Threonine 2 is subject to N-acetylthreonine. Positions 41–510 (LPEVRDGLKP…ADGDVSDEDL (470 aa)) constitute a Topo IIA-type catalytic domain. Catalysis depends on tyrosine 129, which acts as the O-(5'-phospho-DNA)-tyrosine intermediate. The Ca(2+) site is built by aspartate 504, serine 506, glutamate 508, and aspartate 515. An EF-hand domain is found at 504–516 (DVSDEDLIAREDV). The interval 514–838 (EDVVVTITET…DANGADQTGN (325 aa)) is C-terminal domain CTD. Residues 537–543 (QKRGGKG) carry the GyrA-box motif. The GyrA-box-1 motif lies at 743–749 (QGRGGKG).

Belongs to the type II topoisomerase GyrA/ParC subunit family. As to quaternary structure, heterotetramer, composed of two GyrA and two GyrB chains. In the heterotetramer, GyrA contains the active site tyrosine that forms a transient covalent intermediate with DNA, while GyrB binds cofactors and catalyzes ATP hydrolysis. Ca(2+) serves as cofactor.

The protein resides in the cytoplasm. The enzyme catalyses ATP-dependent breakage, passage and rejoining of double-stranded DNA.. With respect to regulation, DNA supercoiling inhibited by (fluoro)quinoline antibiotics such as sparfloxacin and levofloxacin, which usually act on GyrA. DNA supercoiling inhibited by the coumarin antibiotic novobiocin which acts on GyrB. Quinolones lead to gyrase-mediated dsDNA cleavage while preventing reclosure. DNA supercoiling activity inhibited by aminopyrazinamide and pyrrolamide derivatives, probably via effects on the GyrB subunit. DNA relaxation inhibited by ATP and its analogs. DNA supercoiling, relaxation, decatenation and quinolone-promoted DNA cleavage are inhibited by MfpA (50% inhibition occurs at 2 uM), inhibition of gyrase activities is enhanced in a concentration-dependent manner by MfpA. A type II topoisomerase that negatively supercoils closed circular double-stranded (ds) DNA in an ATP-dependent manner to maintain chromosomes in an underwound state, while in the absence of ATP it relaxes supercoiled dsDNA. Also catalyzes the interconversion of other topological isomers of dsDNA rings, including catenanes. Gyrase from M.tuberculosis has higher decatenation than supercoiling activity compared to E.coli; as M.tuberculosis only has 1 type II topoisomerase, gyrase has to fulfill the decatenation function of topoisomerase IV as well. At comparable concentrations M.tuberculosis gyrase cannot introduce as many negative supercoils into DNA as the E.coli enzyme, and its ATPase activity is lower, perhaps because it does not couple DNA wrapping and ATP binding as well as E.coli. In terms of biological role, negative supercoiling favors strand separation, and DNA replication, transcription, recombination and repair, all of which involve strand separation. Type II topoisomerases break and join 2 DNA strands simultaneously in an ATP-dependent manner. The sequence is that of DNA gyrase subunit A from Mycobacterium tuberculosis (strain ATCC 25618 / H37Rv).